The primary structure comprises 99 residues: Putative pterin-4-alpha-carbinolamine dehydratase (99 aa).

This sequence belongs to the pterin-4-alpha-carbinolamine dehydratase family.

It catalyses the reaction (4aS,6R)-4a-hydroxy-L-erythro-5,6,7,8-tetrahydrobiopterin = (6R)-L-erythro-6,7-dihydrobiopterin + H2O. The polypeptide is Putative pterin-4-alpha-carbinolamine dehydratase (Bradyrhizobium sp. (strain BTAi1 / ATCC BAA-1182)).